Reading from the N-terminus, the 377-residue chain is N5-carboxyaminoimidazole ribonucleotide synthase (377 aa).

ATP contacts are provided by residues arginine 93, lysine 133, 138–144 (GYDGRGQ), 175–178 (EEFV), glutamate 183, histidine 206, and 257–258 (NE). In terms of domain architecture, ATP-grasp spans 97–287 (KTLLDHAGVR…QFENHLRAVC (191 aa)).

The protein belongs to the PurK/PurT family. As to quaternary structure, homodimer.

It carries out the reaction 5-amino-1-(5-phospho-beta-D-ribosyl)imidazole + hydrogencarbonate + ATP = 5-carboxyamino-1-(5-phospho-D-ribosyl)imidazole + ADP + phosphate + 2 H(+). It functions in the pathway purine metabolism; IMP biosynthesis via de novo pathway; 5-amino-1-(5-phospho-D-ribosyl)imidazole-4-carboxylate from 5-amino-1-(5-phospho-D-ribosyl)imidazole (N5-CAIR route): step 1/2. In terms of biological role, catalyzes the ATP-dependent conversion of 5-aminoimidazole ribonucleotide (AIR) and HCO(3)(-) to N5-carboxyaminoimidazole ribonucleotide (N5-CAIR). This is N5-carboxyaminoimidazole ribonucleotide synthase from Vibrio vulnificus (strain YJ016).